A 295-amino-acid polypeptide reads, in one-letter code: MRKVKVAILGSGNIGTDLMIKLGRSPILELTSMIGIDPDSDGLRRAKAAGYYVFDGGLQPFLESGAELADIVFDATSAKAHILHAKALREAGKFAIDLTPAAVGPYVVPSVNLGAHLNETNINLITCGGQATIPIVHAIGSVSPVSYAEIVATISSKSAGPGTRSNIDEFTETTAQGIEAIGGAKKGKAIIILNPAEPPILMRDTVYAVVDEGADRQAIVKAIHQTVAYIQSYVPGYRLRSEPIFDENKITVFFEVEGAGNYLPTYSGNLDIMTATAVKVAEEYAKYVVGIGTSM.

NAD(+) is bound at residue 11–14 (SGNI). Cys127 acts as the Acyl-thioester intermediate in catalysis. Residues 158–166 (SAGPGTRSN) and Asn269 each bind NAD(+).

This sequence belongs to the acetaldehyde dehydrogenase family.

The enzyme catalyses acetaldehyde + NAD(+) + CoA = acetyl-CoA + NADH + H(+). The protein is Acetaldehyde dehydrogenase of Brevibacillus brevis (strain 47 / JCM 6285 / NBRC 100599).